The primary structure comprises 647 residues: Beta-glucosidase-like SFR2, chloroplastic (647 aa).

The interval 116–140 is disordered; the sequence is SAAGDGGSQQSWRSTGGENIGDREQ. Residues 123–132 are compositionally biased toward polar residues; the sequence is SQQSWRSTGG. A glycan (N-linked (GlcNAc...) asparagine) is linked at Asn-169. A beta-D-glucoside is bound by residues His-258, 302–303, Tyr-414, Glu-466, Trp-504, 511–512, and Phe-520; these read NE and EW. Residue Glu-303 is the Proton donor of the active site. Glu-466 acts as the Nucleophile in catalysis.

Belongs to the glycosyl hydrolase 1 family.

Its subcellular location is the plastid. It localises to the chloroplast outer membrane. It carries out the reaction 2 a 1,2-diacyl-3-O-(beta-D-galactosyl)-sn-glycerol = a 1,2-diacyl-3-O-[beta-D-galactosyl-(1-&gt;6)-beta-D-galactosyl]-sn-glycerol + a 1,2-diacyl-sn-glycerol. In terms of biological role, galactosyltransferase synthesizing digalactosyldiacylglycerol from monogalactosyldiacylglycerol in the absence of UDP-galactose. Potentially involved in freezing tolerance. The sequence is that of Beta-glucosidase-like SFR2, chloroplastic from Oryza sativa subsp. japonica (Rice).